We begin with the raw amino-acid sequence, 505 residues long: Deoxyguanosinetriphosphate triphosphohydrolase (505 aa).

The HD domain occupies 66–273 (RLTHSMEVQQ…MEAADDISYC (208 aa)).

It belongs to the dGTPase family. Type 1 subfamily. As to quaternary structure, homotetramer. Mg(2+) serves as cofactor.

It catalyses the reaction dGTP + H2O = 2'-deoxyguanosine + triphosphate + H(+). DGTPase preferentially hydrolyzes dGTP over the other canonical NTPs. The chain is Deoxyguanosinetriphosphate triphosphohydrolase from Shigella boydii serotype 18 (strain CDC 3083-94 / BS512).